A 1229-amino-acid polypeptide reads, in one-letter code: Phosphorylase b kinase regulatory subunit alpha, liver isoform (1229 aa).

The segment covering 625-646 (DSLLEDDEEQEEEEEDKFEDDY) has biased composition (acidic residues). The segment at 625 to 648 (DSLLEDDEEQEEEEEDKFEDDYNN) is disordered. Positions 825–855 (LEELYIQAGACKEWGLIRYISGILRKRVEVL) are calmodulin-binding. The tract at residues 1024-1050 (EIKQRCSSPSTPSGILSPVGPGPADGQ) is disordered. Polar residues predominate over residues 1028–1037 (RCSSPSTPSG). Positions 1052–1092 (HWVERQGQWLRRRRLDGAINRVPVGFYQKVWKILQKCHGLS) are calmodulin-binding. C1226 carries S-farnesyl cysteine lipidation.

This sequence belongs to the phosphorylase b kinase regulatory chain family. As to quaternary structure, polymer of 16 chains, four each of alpha, beta, gamma, and delta. Alpha and beta are regulatory chains, gamma is the catalytic chain, and delta is calmodulin. Although the final Cys may be farnesylated, the terminal tripeptide is probably not removed, and the C-terminus is not methylated.

It is found in the cell membrane. It functions in the pathway glycan biosynthesis; glycogen metabolism. With respect to regulation, by phosphorylation of various serine residues and by calcium. Functionally, phosphorylase b kinase catalyzes the phosphorylation of serine in certain substrates, including troponin I. The alpha chain may bind calmodulin. The chain is Phosphorylase b kinase regulatory subunit alpha, liver isoform (phka2) from Takifugu rubripes (Japanese pufferfish).